The sequence spans 484 residues: Zinc metalloproteinase-disintegrin stejnitin (484 aa).

An N-terminal signal peptide occupies residues 1 to 20 (MIQVLLVTICLAVFPYQGNS). The propeptide occupies 21–192 (IILESGNVND…ASQLNLTPDE (172 aa)). Gln193 carries the post-translational modification Pyrrolidone carboxylic acid. A Peptidase M12B domain is found at 194 to 392 (RFIELVIVAD…YTSRCLYNGP (199 aa)). Glu197 contacts Ca(2+). N-linked (GlcNAc...) asparagine glycosylation is present at Asn254. Position 281 (Asp281) interacts with Ca(2+). 3 disulfides stabilise this stretch: Cys305–Cys387, Cys345–Cys369, and Cys347–Cys352. The Zn(2+) site is built by His330, His334, and His340. Cys387, Asn390, Val402, Asn405, Glu409, Glu412, and Asp415 together coordinate Ca(2+). In terms of domain architecture, Disintegrin spans 400–484 (PPVCGNYYVE…GDCPRNPFRA (85 aa)). 7 disulfides stabilise this stretch: Cys403–Cys422, Cys414–Cys432, Cys416–Cys427, Cys426–Cys449, Cys440–Cys446, Cys445–Cys470, and Cys458–Cys477. The Cell attachment site motif lies at 462-464 (KGD).

Belongs to the venom metalloproteinase (M12B) family. P-II subfamily. P-IIb sub-subfamily. The cofactor is Zn(2+). The N-terminus is blocked. Expressed by the venom gland.

It localises to the secreted. Snake venom zinc metalloproteinase that inhibits ADP-induced platelet aggregation in human platelet-rich plasma (IC(50) is 175 nM) and cleaves alpha-(FGA) and subsequently the beta-chain (FGG) of bovine fibrinogen, leaving the gamma-chain unaffected. It is also able to inhibit proliferatin of ECV304 cells by inducing apoptosis of these cells. This chain is Zinc metalloproteinase-disintegrin stejnitin, found in Trimeresurus stejnegeri (Chinese green tree viper).